The chain runs to 300 residues: MQFHSSSALITPFKKDLSVDEAAYESLIKRQIFQGMDACVPVGTTGESATLTHKEHMRCIEIAIETCKNTKTLSNSRMKVLAGVGSNATSESLSLAKFAQKIGADAILCVSPYYNRPTQQGLFEHYKTIAQSVEIPVMLYDVPSRTGVSIEISTALKLFREVPNIKAIKEASGSLKRVTELHYHEKDFKIFSGEDSLNHSIMFSGGCGVISVTGNLMPNLISQMVNCALKLEYQQALEIQNKLFHLHQALFVETNPIPIKMAMHLAGLIENPSYRLPLVAPSKETIQLLEKTLQQYEVIA.

A pyruvate-binding site is contributed by Thr-45. The active-site Proton donor/acceptor is the Tyr-140. Lys-169 acts as the Schiff-base intermediate with substrate in catalysis. Ile-210 contacts pyruvate.

The protein belongs to the DapA family. In terms of assembly, homotetramer; dimer of dimers.

The protein localises to the cytoplasm. The enzyme catalyses L-aspartate 4-semialdehyde + pyruvate = (2S,4S)-4-hydroxy-2,3,4,5-tetrahydrodipicolinate + H2O + H(+). It functions in the pathway amino-acid biosynthesis; L-lysine biosynthesis via DAP pathway; (S)-tetrahydrodipicolinate from L-aspartate: step 3/4. In terms of biological role, catalyzes the condensation of (S)-aspartate-beta-semialdehyde [(S)-ASA] and pyruvate to 4-hydroxy-tetrahydrodipicolinate (HTPA). The polypeptide is 4-hydroxy-tetrahydrodipicolinate synthase (Helicobacter pylori (strain G27)).